The chain runs to 204 residues: Recombination protein RecR (204 aa).

A C4-type zinc finger spans residues 63–78 (CRRCFNITVGELCAIC). The region spanning 86 to 181 (TKICVVEEPL…RVTRPARGLP (96 aa)) is the Toprim domain.

The protein belongs to the RecR family.

Functionally, may play a role in DNA repair. It seems to be involved in an RecBC-independent recombinational process of DNA repair. It may act with RecF and RecO. The protein is Recombination protein RecR of Chloroflexus aurantiacus (strain ATCC 29366 / DSM 635 / J-10-fl).